We begin with the raw amino-acid sequence, 612 residues long: Bifunctional 6(G)-fructosyltransferase/2,1-fructan:2,1-fructan 1-fructosyltransferase (612 aa).

The Cytoplasmic portion of the chain corresponds to 1–24; sequence MDAQDIESRHPLIGARPRRRALRS. Residues 25-45 form a helical; Signal-anchor for type II membrane protein membrane-spanning segment; sequence LSILLAAALLLGLVLFYANGT. At 46 to 612 the chain is on the vacuolar side; the sequence is GSGTAVDPVR…NSTYNDFYHF (567 aa). Residues 82-85, Gln-101, and Trp-109 each bind substrate; that span reads YMND. Residue Asp-85 is part of the active site. A glycan (N-linked (GlcNAc...) asparagine) is linked at Asn-111. Residues 144–145 and 208–209 each bind substrate; these read WT and RD. N-linked (GlcNAc...) asparagine glycosylation is found at Asn-216 and Asn-230. Glu-267 serves as a coordination point for substrate. An N-linked (GlcNAc...) asparagine glycan is attached at Asn-465. An intrachain disulfide couples Cys-466 to Cys-514. Asn-586 and Asn-603 each carry an N-linked (GlcNAc...) asparagine glycan.

This sequence belongs to the glycosyl hydrolase 32 family. Post-translationally, might be processed in two N-terminal and C-terminal proteolytic fragments.

The protein localises to the vacuole membrane. The enzyme catalyses [1-beta-D-fructofuranosyl-(2-&gt;1)-]m+1 alpha-D-glucopyranoside + [1-beta-D-fructofuranosyl-(2-&gt;1)-]n+1 alpha-D-glucopyranoside = [1-beta-D-fructofuranosyl-(2-&gt;1)-]m alpha-D-glucopyranoside + [1-beta-D-fructofuranosyl-(2-&gt;1)-]n+1 beta-D-fructofuranosyl-(2-&gt;6)-alpha-D-glucopyranoside (m &gt; 0, n &gt;= 0).. It catalyses the reaction [beta-D-fructosyl-(2-&gt;1)-]m + [beta-D-fructosyl-(2-&gt;1)-]n = [beta-D-fructosyl-(2-&gt;1)-]m-1 + [beta-D-fructosyl-(2-&gt;1)-]n+1.. Involved in the synthesis of fructan of the inulin neoseries. Catalyzes a self-transfer between identical oligosaccharides of the 1-kestose series. The polypeptide is Bifunctional 6(G)-fructosyltransferase/2,1-fructan:2,1-fructan 1-fructosyltransferase (Allium cepa (Onion)).